The following is a 92-amino-acid chain: Small ribosomal subunit protein uS19 (92 aa).

This sequence belongs to the universal ribosomal protein uS19 family.

In terms of biological role, protein S19 forms a complex with S13 that binds strongly to the 16S ribosomal RNA. The polypeptide is Small ribosomal subunit protein uS19 (rpsS) (Rickettsia prowazekii (strain Madrid E)).